The chain runs to 78 residues: Large ribosomal subunit protein bL28 (78 aa).

Belongs to the bacterial ribosomal protein bL28 family.

The sequence is that of Large ribosomal subunit protein bL28 from Francisella philomiragia subsp. philomiragia (strain ATCC 25017 / CCUG 19701 / FSC 153 / O#319-036).